Reading from the N-terminus, the 514-residue chain is MQQLNPSEISEIIKGRIEKLDVSSQARNEGTVVSVSDGIVRIHGLADVMYGEMIEFPGSVFGMALNLEQDSVGAVVLGDYTSLAEGMSAKCTGRILEVPVGKELLGRVVDALGNPIDGKGPLNNTETDAVEKVAPGVIWRKSVDQPVQTGYKSVDAMIPVGRGQRELIIGDRQIGKTAMAVDAIINQKNSGIFCVYVAVGQKQSTIANVVRKLEEAGALANTIVVAASASESAALQFLAPYAGCTMGEFFRDRGEDALIVYDDLSKQAVAYRQISLLLRRPPGREAYPGDVFYLHSRLLERASRVSEEYVEKFTNGAVTGKTGSLTALPIIETQAGDVSAFVPTNVISITDGQIFLESAMFNAGIRPAVNAGVSVSRVGGAAQTKIIKKLSGGIRTALAQYRELAAFAQFASDLDEATRKQLEHGQRVTELMKQKQYAPMSIADMALSLYAAERGFLTDVEVAKVGSFEQALIAYFNRDHAELMAKINVKGDFNDEIDAGMKAGIEKFKATQTW.

170-177 (GDRQIGKT) contacts ATP.

Belongs to the ATPase alpha/beta chains family. F-type ATPases have 2 components, CF(1) - the catalytic core - and CF(0) - the membrane proton channel. CF(1) has five subunits: alpha(3), beta(3), gamma(1), delta(1), epsilon(1). CF(0) has three main subunits: a(1), b(2) and c(9-12). The alpha and beta chains form an alternating ring which encloses part of the gamma chain. CF(1) is attached to CF(0) by a central stalk formed by the gamma and epsilon chains, while a peripheral stalk is formed by the delta and b chains.

The protein resides in the cell inner membrane. It catalyses the reaction ATP + H2O + 4 H(+)(in) = ADP + phosphate + 5 H(+)(out). In terms of biological role, produces ATP from ADP in the presence of a proton gradient across the membrane. The alpha chain is a regulatory subunit. This Pseudomonas entomophila (strain L48) protein is ATP synthase subunit alpha.